The sequence spans 731 residues: Polyadenylate-binding protein, cytoplasmic and nuclear (731 aa).

Positions 1–10 are enriched in polar residues; sequence MSADVSTTPA. Residues 1-51 are disordered; that stretch reads MSADVSTTPAAENVNGAAEASPAPAAAAPSATTPEVTAVENSTPAPAANQP. Over residues 17-39 the composition is skewed to low complexity; sequence AAEASPAPAAAAPSATTPEVTAV. 4 RRM domains span residues 54 to 132, 142 to 219, 235 to 312, and 338 to 472; these read ASLY…WSQR, GNVF…HHIS, TNVY…RAQK, and VNLY…LAQR. Disordered stretches follow at residues 369–429 and 603–665; these read VMRD…SDKK and GGRG…NAQT. Residues 616 to 627 are compositionally biased toward gly residues; sequence GMRGGPGYGQGR. Positions 645 to 656 are enriched in low complexity; it reads QNAAAPAGPQEG. The PABC domain maps to 658 to 731; the sequence is AGGVNAQTLG…MRPLAFTMST (74 aa).

It belongs to the polyadenylate-binding protein type-1 family.

The protein localises to the cytoplasm. It localises to the nucleus. Functionally, binds the poly(A) tail of mRNA. Appears to be an important mediator of the multiple roles of the poly(A) tail in mRNA biogenesis, stability and translation. In the nucleus, involved in both mRNA cleavage and polyadenylation. Is also required for efficient mRNA export to the cytoplasm. Acts in concert with a poly(A)-specific nuclease (PAN) to affect poly(A) tail shortening, which may occur concomitantly with either nucleocytoplasmic mRNA transport or translational initiation. In the cytoplasm, stimulates translation initiation and regulates mRNA decay through translation termination-coupled poly(A) shortening, probably mediated by PAN. This is Polyadenylate-binding protein, cytoplasmic and nuclear (pab1) from Aspergillus niger (strain ATCC MYA-4892 / CBS 513.88 / FGSC A1513).